A 928-amino-acid polypeptide reads, in one-letter code: Receptor-like kinase TMK4 (928 aa).

The N-terminal stretch at 1-24 (MEAPTPLLLLVLLTTITFFTTSVA) is a signal peptide. Over 25–472 (DDQTAMLALA…GGSSGGGGSK (448 aa)) the chain is Extracellular. Cysteines 51 and 58 form a disulfide. 10 LRR repeats span residues 61–84 (GRVT…ISTL), 85–107 (SELK…FAKL), 108–130 (SSLQ…AFAG), 132–157 (TSLQ…LVDS), 158–180 (TSLT…IFDS), 181–205 (LASL…LGKS), 207–229 (IQNL…LSSM), 230–251 (TSLS…DLSK), 252–276 (SENL…LLTL), and 278–298 (SLKN…LFSP). Asn-144 carries N-linked (GlcNAc...) asparagine glycosylation. N-linked (GlcNAc...) asparagine glycosylation occurs at Asn-193. A glycan (N-linked (GlcNAc...) asparagine) is linked at Asn-281. 2 disulfides stabilise this stretch: Cys-310-Cys-318 and Cys-348-Cys-356. LRR repeat units lie at residues 360 to 383 (GKNV…AIAN), 384 to 407 (LTSL…ELTF), and 408 to 435 (MTSL…VKFS). Asn-383 carries an N-linked (GlcNAc...) asparagine glycan. Residues 445–465 (TNGGDGSSPGTGGASGGPGGS) form a disordered region. Residues 473 to 493 (VGVIVGVIVAVLVFLAILGFV) traverse the membrane as a helical segment. The Cytoplasmic segment spans residues 494-928 (VYKFVMKRKY…PNTFDSADGR (435 aa)). Residues 578–858 (FSEDNILGRG…HAVNVLGPLV (281 aa)) form the Protein kinase domain. Residues 584–592 (LGRGGFGVV) and Lys-606 each bind ATP. Asp-707 (proton acceptor) is an active-site residue. 2 stretches are compositionally biased toward polar residues: residues 898–911 (FHGD…QSSI) and 918–928 (FPNTFDSADGR). The disordered stretch occupies residues 898–928 (FHGDFSYSQTQSSIPPKASGFPNTFDSADGR).

This sequence belongs to the protein kinase superfamily. Ser/Thr protein kinase family. As to quaternary structure, interacts with BAK1 (via kinase domain), SERK4 and SERK5. Expressed in roots, leaves, stems, siliques and flowers. Ubiquitous, with a high expression in mature pollen grains and in the pericycle and the xylem vasculature of the primary and lateral roots.

The protein resides in the membrane. It catalyses the reaction L-seryl-[protein] + ATP = O-phospho-L-seryl-[protein] + ADP + H(+). It carries out the reaction L-threonyl-[protein] + ATP = O-phospho-L-threonyl-[protein] + ADP + H(+). Functionally, involved in auxin signal transduction and cell expansion and proliferation regulation. May be involved in brassinosteroid-mediated plant growth and development via auxin regulation. May be involved in microspore and pollen development. The sequence is that of Receptor-like kinase TMK4 from Arabidopsis thaliana (Mouse-ear cress).